Reading from the N-terminus, the 117-residue chain is DNA-binding protein VNG_2008H (117 aa).

A disordered region spans residues methionine 1–arginine 59. Positions glutamate 11–leucine 21 are enriched in basic and acidic residues. Residues glutamine 35–alanine 48 show a composition bias toward low complexity.

Belongs to the PDCD5 family.

The protein is DNA-binding protein VNG_2008H of Halobacterium salinarum (strain ATCC 700922 / JCM 11081 / NRC-1) (Halobacterium halobium).